A 556-amino-acid polypeptide reads, in one-letter code: U3 small nucleolar RNA-associated protein 18 homolog (556 aa).

A compositionally biased stretch (basic residues) spans Met1–Gly24. The interval Met1–Arg70 is disordered. Positions Ala43–Ala65 are enriched in low complexity. A Glycyl lysine isopeptide (Lys-Gly) (interchain with G-Cter in SUMO2) cross-link involves residue Lys84. Residues Arg111–Val143 form a disordered region. Phosphoserine is present on residues Ser121 and Ser124. Residues Lys183 and Lys201 each participate in a glycyl lysine isopeptide (Lys-Gly) (interchain with G-Cter in SUMO2) cross-link. Positions Val193–Gln219 are disordered. Thr204 bears the Phosphothreonine mark. Phosphoserine occurs at positions 205, 206, and 210. The span at Asp207 to Asp216 shows a compositional bias: acidic residues. A Phosphothreonine modification is found at Thr221. 6 WD repeats span residues Pro249–Ile288, Leu293–Val333, Leu339–Lys380, Ile381–Arg419, Val421–Asn462, and Asn471–Asn512. Lys517 is covalently cross-linked (Glycyl lysine isopeptide (Lys-Gly) (interchain with G-Cter in SUMO2)).

This sequence belongs to the WD repeat UTP18 family. As to quaternary structure, part of the small subunit (SSU) processome, composed of more than 70 proteins and the RNA chaperone small nucleolar RNA (snoRNA) U3.

The protein resides in the nucleus. It localises to the nucleolus. In terms of biological role, part of the small subunit (SSU) processome, first precursor of the small eukaryotic ribosomal subunit. During the assembly of the SSU processome in the nucleolus, many ribosome biogenesis factors, an RNA chaperone and ribosomal proteins associate with the nascent pre-rRNA and work in concert to generate RNA folding, modifications, rearrangements and cleavage as well as targeted degradation of pre-ribosomal RNA by the RNA exosome. Involved in nucleolar processing of pre-18S ribosomal RNA. The chain is U3 small nucleolar RNA-associated protein 18 homolog from Homo sapiens (Human).